The primary structure comprises 160 residues: Serine-protein kinase RsbW (160 aa).

This sequence belongs to the anti-sigma-factor family.

The catalysed reaction is L-seryl-[protein] + ATP = O-phospho-L-seryl-[protein] + ADP + H(+). The enzyme catalyses L-threonyl-[protein] + ATP = O-phospho-L-threonyl-[protein] + ADP + H(+). Functionally, negative regulator of sigma-B activity. Phosphorylates and inactivates its specific antagonist protein, RsbV. Upon phosphorylation of RsbV, RsbW is released and binds to sigma-B, thereby blocking its ability to form an RNA polymerase holoenzyme (E-sigma-B). In Bacillus cereus (strain ZK / E33L), this protein is Serine-protein kinase RsbW.